The following is a 280-amino-acid chain: MGKKLLPGLIHRLPQNAMSRTMGKITATPFSRLAIQRYIKHYQIDTSIIEKPASEYRTLKEFFSRRLKPAARPIAPGPDTIVSPVDGTVSQLGDICEGTLIQAKGKDFSVSELLGGSEEEAKRYYGGKFITIYLSPRDYHRIHMPVTGDLSSYCYLPGRLYPVNKLGIENVDRLFARNERLVTHIKTDSLGDMALVKVGALFVGSVKVCYNTATTNIKHGRQTHEKIAGTPRYEKGSELGWFEFGSTVILLLESNELEWATGVEKGKSLLMGQALATKKA.

Residues Asp-86, His-143, and Ser-246 each act as charge relay system; for autoendoproteolytic cleavage activity in the active site. The Schiff-base intermediate with substrate; via pyruvic acid; for decarboxylase activity role is filled by Ser-246. At Ser-246 the chain carries Pyruvic acid (Ser); by autocatalysis.

The protein belongs to the phosphatidylserine decarboxylase family. PSD-B subfamily. Prokaryotic type I sub-subfamily. Heterodimer of a large membrane-associated beta subunit and a small pyruvoyl-containing alpha subunit. It depends on pyruvate as a cofactor. Is synthesized initially as an inactive proenzyme. Formation of the active enzyme involves a self-maturation process in which the active site pyruvoyl group is generated from an internal serine residue via an autocatalytic post-translational modification. Two non-identical subunits are generated from the proenzyme in this reaction, and the pyruvate is formed at the N-terminus of the alpha chain, which is derived from the carboxyl end of the proenzyme. The autoendoproteolytic cleavage occurs by a canonical serine protease mechanism, in which the side chain hydroxyl group of the serine supplies its oxygen atom to form the C-terminus of the beta chain, while the remainder of the serine residue undergoes an oxidative deamination to produce ammonia and the pyruvoyl prosthetic group on the alpha chain. During this reaction, the Ser that is part of the protease active site of the proenzyme becomes the pyruvoyl prosthetic group, which constitutes an essential element of the active site of the mature decarboxylase.

The protein resides in the cell membrane. The enzyme catalyses a 1,2-diacyl-sn-glycero-3-phospho-L-serine + H(+) = a 1,2-diacyl-sn-glycero-3-phosphoethanolamine + CO2. The protein operates within phospholipid metabolism; phosphatidylethanolamine biosynthesis; phosphatidylethanolamine from CDP-diacylglycerol: step 2/2. Its function is as follows. Catalyzes the formation of phosphatidylethanolamine (PtdEtn) from phosphatidylserine (PtdSer). In Brevibacillus brevis (strain 47 / JCM 6285 / NBRC 100599), this protein is Phosphatidylserine decarboxylase proenzyme.